A 302-amino-acid chain; its full sequence is Putative S-adenosyl-L-methionine-dependent methyltransferase MAV_2803 (302 aa).

S-adenosyl-L-methionine contacts are provided by residues aspartate 129 and 158 to 159; that span reads DL.

This sequence belongs to the UPF0677 family.

Its function is as follows. Exhibits S-adenosyl-L-methionine-dependent methyltransferase activity. The sequence is that of Putative S-adenosyl-L-methionine-dependent methyltransferase MAV_2803 from Mycobacterium avium (strain 104).